Here is a 787-residue protein sequence, read N- to C-terminus: Mitochondrial intermediate peptidase (787 aa).

A mitochondrion-targeting transit peptide spans 1–36 (MQNKVLRGILFKNVPLGYSYNRSIRHPTFGNSIIRW). H573 lines the Zn(2+) pocket. Residue E574 is part of the active site. Residues H577 and H580 each coordinate Zn(2+).

It belongs to the peptidase M3 family. Zn(2+) is required as a cofactor.

Its subcellular location is the mitochondrion matrix. It catalyses the reaction Release of an N-terminal octapeptide as second stage of processing of some proteins imported into the mitochondrion.. Functionally, cleaves proteins, imported into the mitochondrion, to their mature size. While most mitochondrial precursor proteins are processed to the mature form in one step by mitochondrial processing peptidase (MPP), the sequential cleavage by MIP of an octapeptide after initial processing by MPP is a required step for a subgroup of nuclear-encoded precursor proteins destined for the matrix or the inner membrane. This chain is Mitochondrial intermediate peptidase (OCT1), found in Vanderwaltozyma polyspora (strain ATCC 22028 / DSM 70294 / BCRC 21397 / CBS 2163 / NBRC 10782 / NRRL Y-8283 / UCD 57-17) (Kluyveromyces polysporus).